Reading from the N-terminus, the 322-residue chain is Ferrochelatase (322 aa).

Fe cation is bound by residues His194 and Glu275.

This sequence belongs to the ferrochelatase family.

The protein localises to the cytoplasm. It carries out the reaction heme b + 2 H(+) = protoporphyrin IX + Fe(2+). It functions in the pathway porphyrin-containing compound metabolism; protoheme biosynthesis; protoheme from protoporphyrin-IX: step 1/1. Its function is as follows. Catalyzes the ferrous insertion into protoporphyrin IX. The sequence is that of Ferrochelatase from Proteus mirabilis (strain HI4320).